We begin with the raw amino-acid sequence, 399 residues long: Pre-mycofactocin synthase (399 aa).

Positions 4 to 386 (ARDIWFETVA…VPEDILVPEG (383 aa)) constitute an FMN hydroxy acid dehydrogenase domain. S111 and Q131 together coordinate FMN. Y133 is a binding site for a 2-oxocarboxylate. Position 159 (T159) interacts with FMN. Residue R168 participates in a 2-oxocarboxylate binding. Position 257 (K257) interacts with FMN. Residue H281 is the Proton acceptor of the active site. FMN contacts are provided by residues 312–316 (DGGIR) and 335–336 (GR).

It belongs to the FMN-dependent alpha-hydroxy acid dehydrogenase family. FMN is required as a cofactor.

The enzyme catalyses 3-amino-5-[(4-hydroxyphenyl)methyl]-4,4-dimethyl-2-pyrrolidin-2-one + O2 + H2O = pre-mycofactocin + H2O2 + NH4(+). Its function is as follows. Involved in the biosynthesis of the enzyme cofactor mycofactocin (MFT). Catalyzes the oxidative deamination of AHDP (3-amino-5-[(4-hydroxyphenyl)methyl]-4,4-dimethyl-2-pyrrolidin-2-one), forming an alpha-keto amide moiety on the resulting molecule, which is called pre-mycofactocin (PMFT). This reaction occurs via a 5-[(4-hydroxyphenyl)methyl]-3-imino-4,4-dimethylpyrrolidin-2-one intermediate, which converts to PMFT. The alpha-keto amide moiety is the redox-active center for the redox activity of mycofactocin. Is required for the in vivo ethanol assimilation in M.smegmatis. This Mycolicibacterium smegmatis (strain ATCC 700084 / mc(2)155) (Mycobacterium smegmatis) protein is Pre-mycofactocin synthase.